A 262-amino-acid polypeptide reads, in one-letter code: tRNA (guanine-N(7)-)-methyltransferase (262 aa).

Residues 1 to 58 form a disordered region; that stretch reads MLPQDTNTDPLPGDDAESASGKSADASQGTPNPGDEVAHPRRIRSFVRRAGRTSTGQQ. Residues 40 to 51 show a composition bias toward basic residues; that stretch reads PRRIRSFVRRAG. Positions 92, 117, 144, and 167 each coordinate S-adenosyl-L-methionine. The active site involves aspartate 167. Lysine 171 contacts substrate. Residues 173 to 178 form an interaction with RNA region; it reads RHNKRR. Residues aspartate 203 and 241-244 contribute to the substrate site; that span reads TKFE.

It belongs to the class I-like SAM-binding methyltransferase superfamily. TrmB family.

It catalyses the reaction guanosine(46) in tRNA + S-adenosyl-L-methionine = N(7)-methylguanosine(46) in tRNA + S-adenosyl-L-homocysteine. It functions in the pathway tRNA modification; N(7)-methylguanine-tRNA biosynthesis. In terms of biological role, catalyzes the formation of N(7)-methylguanine at position 46 (m7G46) in tRNA. This Cupriavidus metallidurans (strain ATCC 43123 / DSM 2839 / NBRC 102507 / CH34) (Ralstonia metallidurans) protein is tRNA (guanine-N(7)-)-methyltransferase.